The primary structure comprises 37 residues: MVEPLLSGIILGLIPVTLSGLLVAAYLQYQRGNQLGL.

Residues 5–25 (LLSGIILGLIPVTLSGLLVAA) form a helical membrane-spanning segment.

The protein belongs to the PetG family. As to quaternary structure, the 4 large subunits of the cytochrome b6-f complex are cytochrome b6, subunit IV (17 kDa polypeptide, PetD), cytochrome f and the Rieske protein, while the 4 small subunits are PetG, PetL, PetM and PetN. The complex functions as a dimer.

The protein localises to the plastid. Its subcellular location is the chloroplast thylakoid membrane. In terms of biological role, component of the cytochrome b6-f complex, which mediates electron transfer between photosystem II (PSII) and photosystem I (PSI), cyclic electron flow around PSI, and state transitions. PetG is required for either the stability or assembly of the cytochrome b6-f complex. This chain is Cytochrome b6-f complex subunit 5, found in Porphyra purpurea (Red seaweed).